A 336-amino-acid chain; its full sequence is Foldase protein PrsA (336 aa).

Positions 1–22 are cleaved as a signal peptide; sequence MKSAKKLLSVLCLGIFILTFTA. C23 carries the N-palmitoyl cysteine lipid modification. C23 is lipidated: S-diacylglycerol cysteine. In terms of domain architecture, PpiC spans 194 to 286; it reads PNTMNVSHIL…FGYHIIKINS (93 aa).

The protein belongs to the PrsA family.

The protein resides in the cell membrane. The enzyme catalyses [protein]-peptidylproline (omega=180) = [protein]-peptidylproline (omega=0). Its function is as follows. Plays a major role in protein secretion by helping the post-translocational extracellular folding of several secreted proteins. The polypeptide is Foldase protein PrsA (Clostridium botulinum (strain Okra / Type B1)).